Consider the following 701-residue polypeptide: DNA ligase (701 aa).

The tract at residues 1–21 (MSAKSTPDAGPQEQATEAEAE) is disordered. NAD(+)-binding positions include 50–54 (DADFD), 100–101 (SL), and E130. The active-site N6-AMP-lysine intermediate is the K132. NAD(+) is bound by residues R153, E193, K309, and K333. Zn(2+)-binding residues include C427, C430, C446, and C452. A BRCT domain is found at 616-701 (SIARTLEGLS…LENGPQAPEG (86 aa)).

Belongs to the NAD-dependent DNA ligase family. LigA subfamily. Mg(2+) is required as a cofactor. Mn(2+) serves as cofactor.

It catalyses the reaction NAD(+) + (deoxyribonucleotide)n-3'-hydroxyl + 5'-phospho-(deoxyribonucleotide)m = (deoxyribonucleotide)n+m + AMP + beta-nicotinamide D-nucleotide.. DNA ligase that catalyzes the formation of phosphodiester linkages between 5'-phosphoryl and 3'-hydroxyl groups in double-stranded DNA using NAD as a coenzyme and as the energy source for the reaction. It is essential for DNA replication and repair of damaged DNA. This is DNA ligase from Mycobacterium sp. (strain KMS).